We begin with the raw amino-acid sequence, 190 residues long: Female-specific histamine-binding protein 1 (190 aa).

An N-terminal signal peptide occupies residues 1–18 (MKLLLSLAFVLALSQVKA). 7 residues coordinate histamine: Y54, D57, W60, E100, Y118, E153, and W155. 2 cysteine pairs are disulfide-bonded: C66-C187 and C137-C166.

Belongs to the calycin superfamily. Histamine-binding salivary protein family. Monomer. As to expression, expressed in salivary glands.

It is found in the secreted. In terms of biological role, salivary tick protein that acts by scavenging histamine at the wound site, outcompeting histamine receptors for histamine, thereby overcoming host inflammatory responses. Binds histamine with a high-affinity (Kd=18 nM). Contains two binding histamine sites (H and L), that appear to bind histamine with differing affinities (high and low). In vivo, when tested on a mouse asthma model, shows a profound inhibitory effect on allergic asthma. Aerosol administration of this protein prevents airway hyperreactivity and abrogates peribronchial inflammation, eosinophil recruitment, mucus hypersecretion, and interleukins (IL-4 and IL-5) secretion. In addition, when tested on a mouse model of acute respiratory distress syndrome (ARDS), it attenuates endotoxin-induced acute lung injury. This Rhipicephalus appendiculatus (Brown ear tick) protein is Female-specific histamine-binding protein 1.